Consider the following 397-residue polypeptide: NADH-quinone oxidoreductase subunit D (397 aa).

This sequence belongs to the complex I 49 kDa subunit family. In terms of assembly, NDH-1 is composed of 14 different subunits. Subunits NuoB, C, D, E, F, and G constitute the peripheral sector of the complex.

It is found in the cell inner membrane. The catalysed reaction is a quinone + NADH + 5 H(+)(in) = a quinol + NAD(+) + 4 H(+)(out). In terms of biological role, NDH-1 shuttles electrons from NADH, via FMN and iron-sulfur (Fe-S) centers, to quinones in the respiratory chain. The immediate electron acceptor for the enzyme in this species is believed to be ubiquinone. Couples the redox reaction to proton translocation (for every two electrons transferred, four hydrogen ions are translocated across the cytoplasmic membrane), and thus conserves the redox energy in a proton gradient. The sequence is that of NADH-quinone oxidoreductase subunit D from Magnetococcus marinus (strain ATCC BAA-1437 / JCM 17883 / MC-1).